The following is a 381-amino-acid chain: Succinyl-diaminopimelate desuccinylase (381 aa).

His-69 is a Zn(2+) binding site. Residue Asp-71 is part of the active site. Asp-103 lines the Zn(2+) pocket. Glu-137 (proton acceptor) is an active-site residue. Residues Glu-138, Glu-166, and His-355 each contribute to the Zn(2+) site.

The protein belongs to the peptidase M20A family. DapE subfamily. In terms of assembly, homodimer. Requires Zn(2+) as cofactor. Co(2+) serves as cofactor.

It carries out the reaction N-succinyl-(2S,6S)-2,6-diaminopimelate + H2O = (2S,6S)-2,6-diaminopimelate + succinate. The protein operates within amino-acid biosynthesis; L-lysine biosynthesis via DAP pathway; LL-2,6-diaminopimelate from (S)-tetrahydrodipicolinate (succinylase route): step 3/3. Catalyzes the hydrolysis of N-succinyl-L,L-diaminopimelic acid (SDAP), forming succinate and LL-2,6-diaminopimelate (DAP), an intermediate involved in the bacterial biosynthesis of lysine and meso-diaminopimelic acid, an essential component of bacterial cell walls. The polypeptide is Succinyl-diaminopimelate desuccinylase (Rickettsia felis (strain ATCC VR-1525 / URRWXCal2) (Rickettsia azadi)).